Consider the following 276-residue polypeptide: Rhomboid protease GlpG (276 aa).

6 consecutive transmembrane segments (helical) span residues 94-114, 142-162, 169-189, 192-212, 229-249, and 250-270; these read GPVT…MQIL, ALMH…WYLG, LGSG…GYVQ, FSGP…GYVW, LIIF…GMSM, and ANGA…VDSL. Serine 201 serves as the catalytic Nucleophile. Histidine 254 is an active-site residue.

This sequence belongs to the peptidase S54 family.

It is found in the cell inner membrane. It carries out the reaction Cleaves type-1 transmembrane domains using a catalytic dyad composed of serine and histidine that are contributed by different transmembrane domains.. In terms of biological role, rhomboid-type serine protease that catalyzes intramembrane proteolysis. This is Rhomboid protease GlpG from Escherichia coli O157:H7.